The primary structure comprises 419 residues: Putative L-glutamine:3-amino-2,3-dideoxy-scyllo-inosose aminotransferase (419 aa).

The residue at position 199 (K199) is an N6-(pyridoxal phosphate)lysine.

This sequence belongs to the DegT/DnrJ/EryC1 family. L-glutamine:2-deoxy-scyllo-inosose/scyllo-inosose aminotransferase subfamily. It depends on pyridoxal 5'-phosphate as a cofactor.

It catalyses the reaction 3-amino-2,3-dideoxy-scyllo-inosose + L-glutamine = 2-deoxystreptamine + 2-oxoglutaramate. Its pathway is metabolic intermediate biosynthesis; 2-deoxystreptamine biosynthesis; 2-deoxystreptamine from D-glucose 6-phosphate: step 4/4. It participates in antibiotic biosynthesis; kanamycin biosynthesis. In terms of biological role, catalyzes the transamination of 3-amino-2,3-dideoxy-scyllo-inosose (amino-DOI) into 2-deoxystreptamine (DOS). This Streptomyces kanamyceticus protein is Putative L-glutamine:3-amino-2,3-dideoxy-scyllo-inosose aminotransferase (kanD).